Reading from the N-terminus, the 363-residue chain is Chorismate synthase (363 aa).

R47 lines the NADP(+) pocket. Residues 124 to 126 (RAS), G286, 301 to 305 (KPTAT), and R327 contribute to the FMN site.

Belongs to the chorismate synthase family. In terms of assembly, homotetramer. Requires FMNH2 as cofactor.

It catalyses the reaction 5-O-(1-carboxyvinyl)-3-phosphoshikimate = chorismate + phosphate. It participates in metabolic intermediate biosynthesis; chorismate biosynthesis; chorismate from D-erythrose 4-phosphate and phosphoenolpyruvate: step 7/7. In terms of biological role, catalyzes the anti-1,4-elimination of the C-3 phosphate and the C-6 proR hydrogen from 5-enolpyruvylshikimate-3-phosphate (EPSP) to yield chorismate, which is the branch point compound that serves as the starting substrate for the three terminal pathways of aromatic amino acid biosynthesis. This reaction introduces a second double bond into the aromatic ring system. The chain is Chorismate synthase from Prochlorococcus marinus (strain MIT 9211).